Here is a 277-residue protein sequence, read N- to C-terminus: Phosphatidylglycerol--prolipoprotein diacylglyceryl transferase (277 aa).

4 helical membrane passes run 18 to 38 (IAIY…YFMA), 54 to 74 (DLLV…YVIF), 91 to 111 (EGGI…IVFA), and 115 to 135 (GLSF…GQAI). Arginine 137 is a binding site for a 1,2-diacyl-sn-glycero-3-phospho-(1'-sn-glycerol). Helical transmembrane passes span 177 to 197 (QPTF…LLLL), 205 to 225 (GELF…IEGM), and 236 to 256 (LRTA…LWVY).

The protein belongs to the Lgt family.

The protein resides in the cell membrane. The enzyme catalyses L-cysteinyl-[prolipoprotein] + a 1,2-diacyl-sn-glycero-3-phospho-(1'-sn-glycerol) = an S-1,2-diacyl-sn-glyceryl-L-cysteinyl-[prolipoprotein] + sn-glycerol 1-phosphate + H(+). Its pathway is protein modification; lipoprotein biosynthesis (diacylglyceryl transfer). Its function is as follows. Catalyzes the transfer of the diacylglyceryl group from phosphatidylglycerol to the sulfhydryl group of the N-terminal cysteine of a prolipoprotein, the first step in the formation of mature lipoproteins. This chain is Phosphatidylglycerol--prolipoprotein diacylglyceryl transferase, found in Shouchella clausii (strain KSM-K16) (Alkalihalobacillus clausii).